Consider the following 243-residue polypeptide: UPF0246 protein SEQ_2141 (243 aa).

The protein belongs to the UPF0246 family.

The chain is UPF0246 protein SEQ_2141 from Streptococcus equi subsp. equi (strain 4047).